A 337-amino-acid chain; its full sequence is MSTDSSQFEVVPANASALDNDVSSHMSMLYQDIVRNPELFWEMLRDFHESSDKKFKIPIVGGKSLDLHRLFNEVTSRGGLEKVIKDRRCKEVIDAFNFKTTITNSAFVLRKSYLKMLFEFEHLYYFQAPLSTFWEKEKALKLLIEKSANRDKDSQELKPGTVITGIIDGKFESGYLISTKVGSEKLKGMLYHISPETKRGKKKAKSSQGDSHKPPKRQRTGYNFFVAEQSVRIKAENAGQKVSSPKNFGNMWTNLSESDRKVYYEKSREDGKRYKMEILQYRSLMESRVAEIVAATDAGTSASAAETADEASQENLAKTDACTSASSAAETEDEVSQ.

The ARID domain occupies 34-125 (VRNPELFWEM…MLFEFEHLYY (92 aa)). Disordered regions lie at residues 197–221 (TKRG…QRTG) and 298–337 (AGTS…EVSQ). A DNA-binding region (HMG box) is located at residues 215–282 (PKRQRTGYNF…RYKMEILQYR (68 aa)). A compositionally biased stretch (low complexity) spans 319-329 (TDACTSASSAA).

Belongs to the HMGB family.

Its subcellular location is the nucleus. In terms of biological role, binds preferentially DNA with A/T-rich content. The chain is Putative high mobility group B protein 11 (HMGB11) from Arabidopsis thaliana (Mouse-ear cress).